Consider the following 288-residue polypeptide: Bifunctional protein FolD (288 aa).

Residues 166 to 168 (GRS), Ser-191, and Ile-232 each bind NADP(+).

The protein belongs to the tetrahydrofolate dehydrogenase/cyclohydrolase family. Homodimer.

It catalyses the reaction (6R)-5,10-methylene-5,6,7,8-tetrahydrofolate + NADP(+) = (6R)-5,10-methenyltetrahydrofolate + NADPH. The catalysed reaction is (6R)-5,10-methenyltetrahydrofolate + H2O = (6R)-10-formyltetrahydrofolate + H(+). Its pathway is one-carbon metabolism; tetrahydrofolate interconversion. Functionally, catalyzes the oxidation of 5,10-methylenetetrahydrofolate to 5,10-methenyltetrahydrofolate and then the hydrolysis of 5,10-methenyltetrahydrofolate to 10-formyltetrahydrofolate. This Rickettsia canadensis (strain McKiel) protein is Bifunctional protein FolD.